A 154-amino-acid chain; its full sequence is Superoxide dismutase [Cu-Zn] (154 aa).

Cu cation-binding residues include histidine 47, histidine 49, and histidine 64. A disulfide bridge connects residues cysteine 58 and cysteine 147. Positions 64, 72, 81, and 84 each coordinate Zn(2+). Histidine 121 serves as a coordination point for Cu cation. A compositionally biased stretch (basic and acidic residues) spans 125-137; sequence DDLGRGGNEESKK. The disordered stretch occupies residues 125 to 147; it reads DDLGRGGNEESKKTGNAGPRPAC. Arginine 144 contacts substrate.

Homodimer. Requires Cu cation as cofactor. Zn(2+) is required as a cofactor.

The protein localises to the cytoplasm. The catalysed reaction is 2 superoxide + 2 H(+) = H2O2 + O2. Destroys radicals which are normally produced within the cells and which are toxic to biological systems. The chain is Superoxide dismutase [Cu-Zn] from Aspergillus niger.